The sequence spans 620 residues: Chaperone protein DnaK (620 aa).

Threonine 197 carries the phosphothreonine; by autocatalysis modification. The interval 597–620 is disordered; the sequence is AMANKNNAEQPKKKDDDVIDAEVE.

Belongs to the heat shock protein 70 family.

Its function is as follows. Acts as a chaperone. This is Chaperone protein DnaK from Helicobacter pylori (strain Shi470).